A 277-amino-acid chain; its full sequence is MLLDGRKTADILNEALRVKVQYLTKKPKLEIILIGNDEASKSYVKGKLNTASNLGMEVHINYLDEAIDQLSVEALIQKLNTDKGVHGILLQLPIPKHLDSDYLISLIDYKKDVDGFHTMNQGLLFQKKDGIRPATPLGIMMLLDFYNIPIEGKHVVIIGRSQIVGAPLSKMFLDRNATVTITHSKTKNLPSITKQADILVAAIGKPKFVTKDMVKVGAVVVDVGINRVDKKLVGDVDFEHVEPIASYITPVPKGVGPMTICALAHNLYALYLKQEKE.

NADP(+)-binding positions include Gly-159–Ser-161, Ser-184, and Ile-225.

Belongs to the tetrahydrofolate dehydrogenase/cyclohydrolase family. As to quaternary structure, homodimer.

The catalysed reaction is (6R)-5,10-methylene-5,6,7,8-tetrahydrofolate + NADP(+) = (6R)-5,10-methenyltetrahydrofolate + NADPH. It catalyses the reaction (6R)-5,10-methenyltetrahydrofolate + H2O = (6R)-10-formyltetrahydrofolate + H(+). Its pathway is one-carbon metabolism; tetrahydrofolate interconversion. In terms of biological role, catalyzes the oxidation of 5,10-methylenetetrahydrofolate to 5,10-methenyltetrahydrofolate and then the hydrolysis of 5,10-methenyltetrahydrofolate to 10-formyltetrahydrofolate. In Acholeplasma laidlawii (strain PG-8A), this protein is Bifunctional protein FolD.